The primary structure comprises 438 residues: Gamma-glutamyl phosphate reductase (438 aa).

Belongs to the gamma-glutamyl phosphate reductase family.

Its subcellular location is the cytoplasm. It carries out the reaction L-glutamate 5-semialdehyde + phosphate + NADP(+) = L-glutamyl 5-phosphate + NADPH + H(+). The protein operates within amino-acid biosynthesis; L-proline biosynthesis; L-glutamate 5-semialdehyde from L-glutamate: step 2/2. Functionally, catalyzes the NADPH-dependent reduction of L-glutamate 5-phosphate into L-glutamate 5-semialdehyde and phosphate. The product spontaneously undergoes cyclization to form 1-pyrroline-5-carboxylate. This is Gamma-glutamyl phosphate reductase from Prochlorococcus marinus (strain MIT 9313).